A 499-amino-acid chain; its full sequence is Thermostable carboxypeptidase 1 (499 aa).

Residues 6-499 form the Peptidase M32 domain; that stretch reads QNETIKQILA…FVRWVKEKYL (494 aa). The short motif at 238-240 is the HPF element; sequence HPF. Residues 248–252 carry the DXRXT motif; that stretch reads DVRIT. His269 is a Co(2+) binding site. Positions 269 to 273 match the HEXXH motif; the sequence is HEFGH. The active-site Proton donor/acceptor is the Glu270. 2 residues coordinate Co(2+): His273 and Glu299. Residues 298-301 carry the HES/GQ motif; the sequence is HESQ. Positions 350-355 match the I/NRXXA/SD motif; the sequence is IRTEAD. Residues 405 to 412 carry the GXXQDXHW motif; it reads GILQDIHW.

It belongs to the peptidase M32 family. As to quaternary structure, homodimer. Requires Co(2+) as cofactor. Mn(2+) is required as a cofactor.

It catalyses the reaction Release of a C-terminal amino acid with broad specificity, except for -Pro.. EDTA and DTT reversibly abolish carboxypeptidase activity. Functionally, broad specificity carboxypetidase that releases amino acids sequentially from the C-terminus, including neutral, aromatic, polar and basic residues, but not Pro, Gly, Asp and Glu. This chain is Thermostable carboxypeptidase 1, found in Pyrococcus furiosus (strain ATCC 43587 / DSM 3638 / JCM 8422 / Vc1).